The primary structure comprises 975 residues: Glycine dehydrogenase (decarboxylating) (975 aa).

Lysine 723 is modified (N6-(pyridoxal phosphate)lysine).

It belongs to the GcvP family. As to quaternary structure, the glycine cleavage system is composed of four proteins: P, T, L and H. Pyridoxal 5'-phosphate serves as cofactor.

The catalysed reaction is N(6)-[(R)-lipoyl]-L-lysyl-[glycine-cleavage complex H protein] + glycine + H(+) = N(6)-[(R)-S(8)-aminomethyldihydrolipoyl]-L-lysyl-[glycine-cleavage complex H protein] + CO2. The glycine cleavage system catalyzes the degradation of glycine. The P protein binds the alpha-amino group of glycine through its pyridoxal phosphate cofactor; CO(2) is released and the remaining methylamine moiety is then transferred to the lipoamide cofactor of the H protein. This Burkholderia lata (strain ATCC 17760 / DSM 23089 / LMG 22485 / NCIMB 9086 / R18194 / 383) protein is Glycine dehydrogenase (decarboxylating).